The primary structure comprises 1333 residues: Aldehyde oxidase 1 (1333 aa).

Positions 4 to 91 (PQLLFYVNGQ…GTAVTTVEGI (88 aa)) constitute a 2Fe-2S ferredoxin-type domain. The [2Fe-2S] cluster site is built by cysteine 43, cysteine 48, cysteine 51, and cysteine 73. Glutamine 112 provides a ligand contact to Mo-molybdopterin. 4 residues coordinate [2Fe-2S] cluster: cysteine 113, cysteine 116, cysteine 148, and cysteine 150. A Mo-molybdopterin-binding site is contributed by cysteine 150. An FAD-binding PCMH-type domain is found at 235–420 (FYSNRMTWIS…VSVNIPCSRK (186 aa)). Residues 263 to 270 (IVMGYTSV), alanine 344, serine 353, histidine 357, aspartate 366, and leucine 410 contribute to the FAD site. Residues 801–802 (AF) and methionine 1042 each bind Mo-molybdopterin. Serine 1063 carries the post-translational modification Phosphoserine. Residues 1083-1086 (GSVV), glutamine 1198, and leucine 1263 contribute to the Mo-molybdopterin site. Glutamate 1265 serves as the catalytic Proton acceptor; for azaheterocycle hydroxylase activity.

It belongs to the xanthine dehydrogenase family. In terms of assembly, homodimer. It depends on [2Fe-2S] cluster as a cofactor. FAD is required as a cofactor. Mo-molybdopterin serves as cofactor. The N-terminus is blocked. As to expression, expression in liver (at protein level). Also detected in heart, lung, spleen and kidney.

The protein resides in the cytoplasm. It catalyses the reaction an aldehyde + O2 + H2O = a carboxylate + H2O2 + H(+). It carries out the reaction retinal + O2 + H2O = retinoate + H2O2 + H(+). Inhibited by menadione and isovanillin. Not inhibited by allopurinol, a xanthine dehydrogenase potent inhibitor. Inhibited by the flavonoids quercetin, myricetin and genistein. Nitric oxide generation is inhibited by raloxifene and competitively inhibited by an increase in oxygen levels. Its function is as follows. Oxidase with broad substrate specificity, oxidizing aromatic azaheterocycles, such as N1-methylnicotinamide, N-methylphthalazinium and phthalazine, as well as aldehydes, such as benzaldehyde, retinal, pyridoxal, and vanillin. Plays a role in the metabolism of xenobiotics and drugs containing aromatic azaheterocyclic substituents. Participates in the bioactivation of prodrugs such as famciclovir, catalyzing the oxidation step from 6-deoxypenciclovir to penciclovir, which is a potent antiviral agent. Is probably involved in the regulation of reactive oxygen species homeostasis. Is a prominent source of superoxide generation via the one-electron reduction of molecular oxygen. Also catalyzes nitric oxide (NO) production; under anaerobic conditions, reduces nitrite to NO with NADH or aldehyde as electron donor, but under aerobic conditions, NADH is the preferred substrate. These reactions may be catalyzed by several isozymes. May play a role in adipogenesis. The protein is Aldehyde oxidase 1 of Rattus norvegicus (Rat).